The sequence spans 415 residues: Glutamyl-tRNA reductase (415 aa).

Substrate contacts are provided by residues 49–52 (TCNR), S104, 109–111 (EPQ), and Q115. The Nucleophile role is filled by C50. NADP(+) is bound at residue 184–189 (GAGEMI).

This sequence belongs to the glutamyl-tRNA reductase family. As to quaternary structure, homodimer.

It catalyses the reaction (S)-4-amino-5-oxopentanoate + tRNA(Glu) + NADP(+) = L-glutamyl-tRNA(Glu) + NADPH + H(+). It participates in porphyrin-containing compound metabolism; protoporphyrin-IX biosynthesis; 5-aminolevulinate from L-glutamyl-tRNA(Glu): step 1/2. Its function is as follows. Catalyzes the NADPH-dependent reduction of glutamyl-tRNA(Glu) to glutamate 1-semialdehyde (GSA). This chain is Glutamyl-tRNA reductase, found in Neisseria gonorrhoeae (strain ATCC 700825 / FA 1090).